The sequence spans 183 residues: Apo-citrate lyase phosphoribosyl-dephospho-CoA transferase (183 aa).

It belongs to the CitX family.

The catalysed reaction is apo-[citrate lyase ACP] + 2'-(5''-triphospho-alpha-D-ribosyl)-3'-dephospho-CoA = holo-[citrate lyase ACP] + diphosphate. In terms of biological role, transfers 2-(5''-triphosphoribosyl)-3'-dephosphocoenzyme-A on a serine residue to the apo-acyl carrier protein (gamma chain) of the citrate lyase to yield holo-acyl carrier protein. This chain is Apo-citrate lyase phosphoribosyl-dephospho-CoA transferase, found in Escherichia coli O45:K1 (strain S88 / ExPEC).